The chain runs to 568 residues: Phosphoprotein (568 aa).

Disordered regions lie at residues Met-1–Arg-22 and Pro-40–Glu-320. Positions Ile-7–Gly-20 are enriched in basic and acidic residues. The interval Asp-33–Thr-41 is N0 binding. Over residues Leu-50–Pro-60 the composition is skewed to polar residues. Ser-68 bears the Phosphoserine; by host mark. Basic and acidic residues predominate over residues Arg-83–Ala-101. The residue at position 125 (Ser-125) is a Phosphoserine; by host. Residues Gly-150–Asp-168 are compositionally biased toward basic and acidic residues. Positions Ala-191–Ala-206 are enriched in polar residues. 3 positions are modified to phosphoserine; by host: Ser-192, Ser-249, and Ser-257. The multimerization stretch occupies residues Phe-344 to Ser-411. Positions Tyr-364 to His-429 form a coiled coil. The l protein binding stretch occupies residues Glu-412–Thr-445. Phosphoserine; by host is present on residues Ser-447 and Ser-449. Positions Asp-479–Asn-568 are interaction with the nucleocapsid (N-RNA).

The protein belongs to the respirovirus P protein family. In terms of assembly, homotetramer. Interacts (via multimerization domain) with polymerase L; this interaction forms the polymerase complex. Interacts (via N-terminus) with N0; this interaction allows P to chaperon N0 before encapsidation and form the N-P complex. Interacts (via C-terminus) with N-RNA template; this interaction positions the polymerase on the template. Post-translationally, phosphorylated by PKC/PRKCZ, and other unknown kinases. Phosphorylation is necessary for viral transcription and replication. The N-terminus contains the majority of phosphorylated sites. Ser-249 is the major site of phosphorylation, but is not necessary for most functions.

The protein localises to the host cytoplasm. Essential cofactor of the RNA polymerase L that plays a central role in the transcription and replication by forming the polymerase complex with RNA polymerase L and recruiting L to the genomic N-RNA template for RNA synthesis. Also plays a central role in the encapsidation of nascent RNA chains by forming the encapsidation complex with the nucleocapsid protein N (N-P complex). Acts as a chaperone for newly synthesized free N protein, so-called N0, allowing encapsidation of nascent RNA chains during replication. The nucleoprotein protein N prevents excessive phosphorylation of P, which leads to down-regulation of viral transcription/ replication. Participates, together with N, in the formation of viral factories (viroplasms), which are large inclusions in the host cytoplasm where replication takes place. Recruits host PI4KB and remodel the host endoplasmic reticulum membrane to form viral replication factories. The protein is Phosphoprotein (P/V/C) of Sendai virus (strain 6/94) (SeV).